The chain runs to 171 residues: Transcription factor E (171 aa).

The HTH TFE/IIEalpha-type domain maps to 1–81; that stretch reads MLNLAKELVG…YWKVNVNQIN (81 aa).

Belongs to the TFE family. Monomer. Interaction with RNA polymerase subunits RpoF and RpoE is necessary for Tfe stimulatory transcription activity. Able to interact with Tbp and RNA polymerase in the absence of DNA promoter. Interacts both with the preinitiation and elongation complexes.

Transcription factor that plays a role in the activation of archaeal genes transcribed by RNA polymerase. Facilitates transcription initiation by enhancing TATA-box recognition by TATA-box-binding protein (Tbp), and transcription factor B (Tfb) and RNA polymerase recruitment. Not absolutely required for transcription in vitro, but particularly important in cases where Tbp or Tfb function is not optimal. It dynamically alters the nucleic acid-binding properties of RNA polymerases by stabilizing the initiation complex and destabilizing elongation complexes. Seems to translocate with the RNA polymerase following initiation and acts by binding to the non template strand of the transcription bubble in elongation complexes. The chain is Transcription factor E from Sulfolobus acidocaldarius (strain ATCC 33909 / DSM 639 / JCM 8929 / NBRC 15157 / NCIMB 11770).